A 373-amino-acid chain; its full sequence is Chorismate synthase (373 aa).

Residue R46 coordinates NADP(+). FMN contacts are provided by residues 123-125 (RSS), 251-252 (NA), G295, 310-314 (KPTPS), and R337.

It belongs to the chorismate synthase family. FMNH2 serves as cofactor.

It catalyses the reaction 5-O-(1-carboxyvinyl)-3-phosphoshikimate = chorismate + phosphate. It participates in metabolic intermediate biosynthesis; chorismate biosynthesis; chorismate from D-erythrose 4-phosphate and phosphoenolpyruvate: step 7/7. Its function is as follows. Catalyzes the anti-1,4-elimination of the C-3 phosphate and the C-6 proR hydrogen from 5-enolpyruvylshikimate-3-phosphate (EPSP) to yield chorismate, which is the branch point compound that serves as the starting substrate for the three terminal pathways of aromatic amino acid biosynthesis. This reaction introduces a second double bond into the aromatic ring system. The chain is Chorismate synthase from Methanococcus maripaludis (strain DSM 14266 / JCM 13030 / NBRC 101832 / S2 / LL).